A 626-amino-acid chain; its full sequence is Protein MICRORCHIDIA 2 (626 aa).

Residues Met579–Ala626 adopt a coiled-coil conformation.

The protein belongs to the MORC ATPase protein family. In terms of assembly, homodimer and heterodimer with MORC6. Component of an RNA-directed DNA methylation (RdDM) complex that contains at least MORC6, MORC1/CRT1, MORC2, SWI3D and SUVH9. Binds directly to SUVH9. Mg(2+) is required as a cofactor. The cofactor is Mn(2+).

It is found in the nucleus. It localises to the endosome. Its function is as follows. Mediator of defense signaling triggered by distinct classes of R proteins. Required during hypersensitive response (HR) that confers disease resistance to turnip crinkle virus (TCV). Contributes to resistance against Pseudomonas syringae and Hyaloperonospora arabidopsidis, at early stages prior to cytosolic calcium ions Ca(2+) accumulation. Required for pathogen-associated molecular pattern (PAMP)-triggered immunity, basal resistance, non-host resistance and systemic acquired resistance (SAR). Involved in RNA-directed DNA methylation (RdDM) as a component of the RdDM machinery and required for gene silencing. May also be involved in the regulation of chromatin architecture to maintain gene silencing. Exhibits ATPase activity. This chain is Protein MICRORCHIDIA 2, found in Arabidopsis thaliana (Mouse-ear cress).